The chain runs to 306 residues: Ornithine carbamoyltransferase (306 aa).

Carbamoyl phosphate is bound by residues 51-54 (STRT), Gln78, Arg102, and 129-132 (HPVQ). Residues Asn159, Asp223, and 227–228 (SM) contribute to the L-ornithine site. Carbamoyl phosphate-binding positions include 263 to 264 (CL) and Arg291.

It belongs to the aspartate/ornithine carbamoyltransferase superfamily. OTCase family.

It localises to the cytoplasm. It catalyses the reaction carbamoyl phosphate + L-ornithine = L-citrulline + phosphate + H(+). It functions in the pathway amino-acid biosynthesis; L-arginine biosynthesis; L-arginine from L-ornithine and carbamoyl phosphate: step 1/3. Reversibly catalyzes the transfer of the carbamoyl group from carbamoyl phosphate (CP) to the N(epsilon) atom of ornithine (ORN) to produce L-citrulline. In Sulfurovum sp. (strain NBC37-1), this protein is Ornithine carbamoyltransferase.